A 106-amino-acid chain; its full sequence is uncharacterized protein (106 aa).

This is an uncharacterized protein from Pseudanabaena tenuis (strain PCC 7409).